Here is a 433-residue protein sequence, read N- to C-terminus: Inositol hexakisphosphate kinase 1 (433 aa).

A disordered region spans residues 100–160 (ETVEQDDTPE…SPKVELHSHS (61 aa)). Residues 113–123 (PRRKHSRRSLH) are compositionally biased toward basic residues. Positions 139-149 (SFETSESSQET) are enriched in polar residues. Basic and acidic residues predominate over residues 150–160 (KSPKVELHSHS). Serine 151 is modified (phosphoserine). 220 to 228 (PCVLDLKMG) lines the substrate pocket. The segment at 362 to 383 (PLCGPSTSPSNTSLEAGPSSPP) is disordered. Positions 366 to 375 (PSTSPSNTSL) are enriched in polar residues.

The protein belongs to the inositol phosphokinase (IPK) family.

It localises to the cytoplasm. The protein localises to the nucleus. The catalysed reaction is 1D-myo-inositol hexakisphosphate + ATP = 5-diphospho-1D-myo-inositol 1,2,3,4,6-pentakisphosphate + ADP. It catalyses the reaction 1-diphospho-1D-myo-inositol 2,3,4,5,6-pentakisphosphate + ATP + H(+) = 1,5-bis(diphospho)-1D-myo-inositol 2,3,4,6-tetrakisphosphate + ADP. In terms of biological role, converts inositol hexakisphosphate (InsP6) to diphosphoinositol pentakisphosphate (InsP7/PP-InsP5). Converts 1,3,4,5,6-pentakisphosphate (InsP5) to PP-InsP4. The protein is Inositol hexakisphosphate kinase 1 (Ip6k1) of Rattus norvegicus (Rat).